A 148-amino-acid polypeptide reads, in one-letter code: MSVLTEFKAFAVKGNVVDMAVGIIIGAAFGKIVSSFVGDVIMPPLGLLIGGVDFSDLAVTLRPAQGTAPAVLLAYGKFIQTVIDFIIVAFAIFMGVKAINRLKREEAKAPTLPPTPSKQEVLLSEIRDLLKAQNTPAAPITVDPARTL.

The next 2 helical transmembrane spans lie at 9 to 29 and 79 to 99; these read AFAV…GAAF and IQTV…VKAI.

It belongs to the MscL family. In terms of assembly, homopentamer.

It is found in the cell inner membrane. Channel that opens in response to stretch forces in the membrane lipid bilayer. May participate in the regulation of osmotic pressure changes within the cell. In Pseudomonas syringae pv. tomato (strain ATCC BAA-871 / DC3000), this protein is Large-conductance mechanosensitive channel.